The chain runs to 140 residues: Cytochrome c oxidase subunit 6, mitochondrial (140 aa).

It belongs to the cytochrome c oxidase subunit 5A family. As to quaternary structure, component of the cytochrome c oxidase (complex IV, CIV), a multisubunit enzyme composed of a catalytic core of 3 subunits and several supernumerary subunits. The complex exists as a monomer or a dimer and forms supercomplexes (SCs) in the inner mitochondrial membrane with ubiquinol-cytochrome c oxidoreductase (cytochrome b-c1 complex, complex III, CIII).

The protein resides in the mitochondrion inner membrane. The protein operates within energy metabolism; oxidative phosphorylation. In terms of biological role, component of the cytochrome c oxidase, the last enzyme in the mitochondrial electron transport chain which drives oxidative phosphorylation. The respiratory chain contains 3 multisubunit complexes succinate dehydrogenase (complex II, CII), ubiquinol-cytochrome c oxidoreductase (cytochrome b-c1 complex, complex III, CIII) and cytochrome c oxidase (complex IV, CIV), that cooperate to transfer electrons derived from NADH and succinate to molecular oxygen, creating an electrochemical gradient over the inner membrane that drives transmembrane transport and the ATP synthase. Cytochrome c oxidase is the component of the respiratory chain that catalyzes the reduction of oxygen to water. Electrons originating from reduced cytochrome c in the intermembrane space (IMS) are transferred via the dinuclear copper A center (CU(A)) of subunit 2 and heme A of subunit 1 to the active site in subunit 1, a binuclear center (BNC) formed by heme A3 and copper B (CU(B)). The BNC reduces molecular oxygen to 2 water molecules using 4 electrons from cytochrome c in the IMS and 4 protons from the mitochondrial matrix. This Schizosaccharomyces pombe (strain 972 / ATCC 24843) (Fission yeast) protein is Cytochrome c oxidase subunit 6, mitochondrial (cox6).